Reading from the N-terminus, the 339-residue chain is Phenylalanine--tRNA ligase alpha subunit (339 aa).

Glutamate 254 serves as a coordination point for Mg(2+).

Belongs to the class-II aminoacyl-tRNA synthetase family. Phe-tRNA synthetase alpha subunit type 1 subfamily. As to quaternary structure, tetramer of two alpha and two beta subunits. Requires Mg(2+) as cofactor.

It localises to the cytoplasm. It catalyses the reaction tRNA(Phe) + L-phenylalanine + ATP = L-phenylalanyl-tRNA(Phe) + AMP + diphosphate + H(+). This Clostridium perfringens (strain ATCC 13124 / DSM 756 / JCM 1290 / NCIMB 6125 / NCTC 8237 / Type A) protein is Phenylalanine--tRNA ligase alpha subunit.